Reading from the N-terminus, the 368-residue chain is Galactoside 2-alpha-L-fucosyltransferase Sec1 (368 aa).

Residues 1–20 (MPSDSCLLSLTVLQRLRAIC) lie on the Cytoplasmic side of the membrane. Residues 21–41 (PPLSTFYLFFVIFVVSTIFHC) form a helical; Signal-anchor for type II membrane protein membrane-spanning segment. The Lumenal segment spans residues 42–368 (HRRLGLVPAP…APKRHWGALL (327 aa)). Residues Asn-195, Asn-289, and Asn-315 are each glycosylated (N-linked (GlcNAc...) asparagine).

It belongs to the glycosyltransferase 11 family.

It is found in the golgi apparatus. Its subcellular location is the golgi stack membrane. It carries out the reaction a ganglioside GM1 + GDP-beta-L-fucose = a ganglioside Fuc-GM1 + GDP + H(+). It participates in protein modification; protein glycosylation. Catalyzes the transfer of alpha 1,2-linked fucose to ganglioside GM1 and galacto-N-biose. The sequence is that of Galactoside 2-alpha-L-fucosyltransferase Sec1 from Mus musculus (Mouse).